The following is an 88-amino-acid chain: Putative transmembrane protein ORF24 (88 aa).

Helical transmembrane passes span 16–36 (LNMG…WAGM), 42–62 (AVFV…VTQF), and 64–84 (FIWF…VASI).

The protein resides in the host membrane. This chain is Putative transmembrane protein ORF24, found in Haloarcula hispanica (His1V).